A 640-amino-acid chain; its full sequence is Threonine--tRNA ligase (640 aa).

Positions 1-61 (MPAITLPDGS…DADARLRFIT (61 aa)) constitute a TGS domain. The tract at residues 243–536 (DHRKIGRQMD…LIENCAGRFP (294 aa)) is catalytic. The Zn(2+) site is built by C336, H387, and H513.

The protein belongs to the class-II aminoacyl-tRNA synthetase family. As to quaternary structure, homodimer. Requires Zn(2+) as cofactor.

It localises to the cytoplasm. The catalysed reaction is tRNA(Thr) + L-threonine + ATP = L-threonyl-tRNA(Thr) + AMP + diphosphate + H(+). In terms of biological role, catalyzes the attachment of threonine to tRNA(Thr) in a two-step reaction: L-threonine is first activated by ATP to form Thr-AMP and then transferred to the acceptor end of tRNA(Thr). Also edits incorrectly charged L-seryl-tRNA(Thr). In Acidiphilium cryptum (strain JF-5), this protein is Threonine--tRNA ligase.